A 370-amino-acid polypeptide reads, in one-letter code: Cyclic dehypoxanthine futalosine synthase (370 aa).

The Radical SAM core domain maps to 50–295; the sequence is TTFVIGRNVN…QSSWVTMGPE (246 aa). Positions 64, 68, and 71 each coordinate [4Fe-4S] cluster.

This sequence belongs to the radical SAM superfamily. MqnC family. The cofactor is [4Fe-4S] cluster.

It catalyses the reaction dehypoxanthine futalosine + S-adenosyl-L-methionine = cyclic dehypoxanthinylfutalosinate + 5'-deoxyadenosine + L-methionine + H(+). It functions in the pathway quinol/quinone metabolism; menaquinone biosynthesis. In terms of biological role, radical SAM enzyme that catalyzes the cyclization of dehypoxanthine futalosine (DHFL) into cyclic dehypoxanthine futalosine (CDHFL), a step in the biosynthesis of menaquinone (MK, vitamin K2). This chain is Cyclic dehypoxanthine futalosine synthase, found in Halalkalibacterium halodurans (strain ATCC BAA-125 / DSM 18197 / FERM 7344 / JCM 9153 / C-125) (Bacillus halodurans).